The chain runs to 322 residues: MAASRSLVPDRLRLPLCFLGVFVCYFYYGILQEKITRGKYGEGPKQETFTFALTLVFIQCVINAMFAKILIQFFDTARVDRTRTWLYAACSVSYVGAMVSSNSALQFVNYPTQVLGKSCKPIPVMLLGVTLLKKKYPLAKYLCVLLIVAGVALFMYKPKKVVGIEEHTVGFGELLLLLSLTLDGLTGVSQDHMRAHYQTGSNHMMLNINLWSTVLLGAGILFTGELWEFLSFAERYPTIIYNILLFGLTSALGQSFIFMTVVYFGPLTCSIITTTRKFFTILASVILFANPISSMQWVGTVLVFLGLGLDAKFGKGTKKTSH.

A run of 8 helical transmembrane segments spans residues 12–32 (LRLP…GILQ), 51–71 (FALT…KILI), 85–105 (WLYA…NSAL), 136–156 (YPLA…LFMY), 168–188 (TVGF…LTGV), 210–230 (LWST…WEFL), 243–263 (ILLF…TVVY), and 285–305 (VILF…LVFL). Residues 318–322 (KKTSH) carry the Di-lysine motif motif.

This sequence belongs to the nucleotide-sugar transporter family. SLC35B subfamily.

The protein localises to the endoplasmic reticulum membrane. It carries out the reaction ADP(in) + ATP(out) = ADP(out) + ATP(in). The catalysed reaction is UDP(out) + ATP(in) = UDP(in) + ATP(out). It catalyses the reaction UTP(out) + ATP(in) = UTP(in) + ATP(out). The enzyme catalyses dATP(out) + ATP(in) = dATP(in) + ATP(out). Functionally, ATP:ADP antiporter that catalyzes the exchange of ATP and ADP across the endoplasmic reticulum (ER) membrane. Imports ATP from the cytosol to the ER lumen and exports ADP in the opposite direction. Regulates ER energy metabolism and protein biogenesis. Appears to be part of a calcium-dependent ER to cytosol low energy response axis, where calcium efflux from ER to the cytosol triggers ATP import into the ER lumen to maintain sufficient ATP supply. Provides ATP to ER chaperone HSPA5 that drives protein folding and trafficking in the ER. Can transport dATP, UTP or UDP in exchange for ATP, but the physiological relevance of this process remains to be established. In Rattus norvegicus (Rat), this protein is Solute carrier family 35 member B1 (Slc35b1).